The sequence spans 325 residues: Lipid droplet-associated hydrolase (325 aa).

The active-site Nucleophile is serine 139. Residues aspartate 271 and histidine 300 each act as charge relay system in the active site.

This sequence belongs to the AB hydrolase superfamily. LDAH family.

The protein localises to the lipid droplet. The protein resides in the endoplasmic reticulum. It catalyses the reaction a cholesterol ester + H2O = cholesterol + a fatty acid + H(+). Its function is as follows. Probable serine lipid hydrolase associated with lipid droplets. Has low cholesterol esterase activity. Appears to lack triglyceride lipase activity. Involved in cholesterol and triglyceride homeostasis; stimulates cellular triglyceride accumulation and cellular cholesterol release. Acts antagonistically with PNPLA2/ATGL in regulation of cellular lipid stores. May regulate triglyceride accumulation indirectly through stimulation of PNPLA2/ATGL ubiquitination and proteasomal degradation. Promotes microtubule-dependent lipid droplet fusion. Highly expressed in macrophage-rich areas in atherosclerotic lesions, suggesting that it could promote cholesterol ester turnover in macrophages. This Rattus norvegicus (Rat) protein is Lipid droplet-associated hydrolase.